The sequence spans 160 residues: MSNQDNERPAKTANQRGAARLAAVQALYQMDIGGTGVLEVVAEYEAHRLGQELDGDTYLKADASWFRSIVSGVVREQTRLDPLIGSALQDDWALSRLDSTVRAILRAGTFEILDRKDVPVAVIVTEYVEIAHAFFDDDEPKLVNAVLDRIAKQVRGEAKK.

It belongs to the NusB family.

In terms of biological role, involved in transcription antitermination. Required for transcription of ribosomal RNA (rRNA) genes. Binds specifically to the boxA antiterminator sequence of the ribosomal RNA (rrn) operons. This Rhizobium rhizogenes (strain K84 / ATCC BAA-868) (Agrobacterium radiobacter) protein is Transcription antitermination protein NusB.